We begin with the raw amino-acid sequence, 453 residues long: Homogentisate 1,2-dioxygenase (453 aa).

H306 (proton acceptor) is an active-site residue. H349 and E355 together coordinate Fe cation. The homogentisate site is built by Y364 and H385. Fe cation is bound at residue H385.

This sequence belongs to the homogentisate dioxygenase family. As to quaternary structure, hexamer; dimer of trimers. The cofactor is Fe cation.

It catalyses the reaction homogentisate + O2 = 4-maleylacetoacetate + H(+). It functions in the pathway amino-acid degradation; L-phenylalanine degradation; acetoacetate and fumarate from L-phenylalanine: step 4/6. Involved in the catabolism of homogentisate (2,5-dihydroxyphenylacetate or 2,5-OH-PhAc), a central intermediate in the degradation of phenylalanine and tyrosine. Catalyzes the oxidative ring cleavage of the aromatic ring of homogentisate to yield maleylacetoacetate. The chain is Homogentisate 1,2-dioxygenase from Rhizobium johnstonii (strain DSM 114642 / LMG 32736 / 3841) (Rhizobium leguminosarum bv. viciae).